The sequence spans 910 residues: Importin subunit beta-2 (910 aa).

HEAT repeat units lie at residues 12–39 (VLVE…NLLE), 44–82 (IPDL…VSSL), 93–126 (YTKS…RWGI), 132–169 (VLPQ…LDRD), 177–207 (DFMI…QFVL), 220–247 (FLET…VYLL), 259–286 (GSIV…FWLA), 302–406 (DKIV…LSSF), 414–442 (IILP…GAIA), 454–481 (PELY…TLGR), 499–532 (FVPL…EEQA), 540–573 (LEPI…ADYV), 581–619 (RYIE…VALR), 627–677 (AETY…ALGS), 690–721 (LGQI…MYCF), 729–764 (DALL…LQLG), 772–807 (KPLL…VYNP), 815–848 (ELFY…LACN), and 857–888 (PMFV…VELF). One can recognise an Importin N-terminal domain in the interval 34-122 (ALNLLEKAKD…SGNVITTIIS (89 aa)). Positions 333–381 (DREEDIRPQHAKGKSRITLNTQGPITQQGSSNADADELEDEDEDDDEFD) are disordered. Positions 349–364 (ITLNTQGPITQQGSSN) are enriched in polar residues. Residues 366-381 (DADELEDEDEDDDEFD) show a composition bias toward acidic residues.

The protein belongs to the importin beta family. Importin beta-2 subfamily. As to quaternary structure, interacts with Ran; interacts specifically with the GTP-bound form of Ran (GTP-Ran), protecting it from GTP hydrolysis and nucleotide exchange. Interacts with nucleoporins.

It is found in the cytoplasm. The protein resides in the nucleus envelope. In terms of biological role, functions in nuclear protein import as nuclear transport receptor. Serves as receptor for arginine/glycine-rich nuclear localization signals (rg-NLS) and PY-NLS in cargo substrates. Its predominant cargo substrate seems to be mRNA-binding proteins. Mediates docking of the importin/substrate complex to the nuclear pore complex (NPC) through binding to repeat-containing nucleoporins. The complex is subsequently translocated through the pore by an energy requiring, Ran-dependent mechanism. At the nucleoplasmic side of the NPC, GTP-Ran binding leads to release of the cargo. The importin is re-exported from the nucleus to the cytoplasm where GTP hydrolysis releases Ran from importin. The directionality of nuclear import is thought to be conferred by an asymmetric distribution of the GTP- and GDP-bound forms of Ran between the cytoplasm and nucleus. This Schizosaccharomyces pombe (strain 972 / ATCC 24843) (Fission yeast) protein is Importin subunit beta-2.